Here is a 319-residue protein sequence, read N- to C-terminus: Taste receptor type 2 member 39 (319 aa).

At 1-16 the chain is on the extracellular side; the sequence is MAQPSNYWKQDLLPLS. The chain crosses the membrane as a helical span at residues 17 to 37; it reads ILILTLVATECTIGIIASGII. Residues 38-56 lie on the Cytoplasmic side of the membrane; the sequence is TVVNAVSWVQKRAVSITTR. A helical membrane pass occupies residues 57–77; it reads ILLLLSVSRIGLQSIILIEMT. Residues 78–97 are Extracellular-facing; sequence SSIFNFSSYNSVLYRVSRVS. N-linked (GlcNAc...) asparagine glycosylation is present at Asn82. A helical transmembrane segment spans residues 98 to 118; the sequence is FVFLNYCSLWFAALLSFFHFV. Residues 119–137 are Cytoplasmic-facing; sequence KIANFSYPLFFKLKWRISE. Residues 138-158 form a helical membrane-spanning segment; it reads LMPWLLWLSVFISFSSSMFFC. The Extracellular portion of the chain corresponds to 159-187; sequence NHKYTVYNNISLSSNICNFTMELYVAEAN. N-linked (GlcNAc...) asparagine glycans are attached at residues Asn167 and Asn176. Residues 188-208 form a helical membrane-spanning segment; that stretch reads VVNVAFLFSFGILPPLTMFIA. Residues 209 to 247 lie on the Cytoplasmic side of the membrane; sequence TATLLIFSLRRHTLHMRNGDADSRNPRVEAHKQAIKETS. The chain crosses the membrane as a helical span at residues 248-268; that stretch reads CFLFLYILYAAVLFLSTSNIA. At 269–273 the chain is on the extracellular side; it reads DASLF. The chain crosses the membrane as a helical span at residues 274 to 294; sequence WSSVLRISLPVYPAGHSVLLI. Over 295 to 319 the chain is Cytoplasmic; that stretch reads QSNPGLKRTWKQLLSQIHLHLQSRY.

This sequence belongs to the G-protein coupled receptor T2R family.

It is found in the membrane. Functionally, putative taste receptor which may play a role in the perception of bitterness. The chain is Taste receptor type 2 member 39 from Rattus norvegicus (Rat).